Consider the following 775-residue polypeptide: Dipeptidyl peptidase 4 (775 aa).

An N-terminal signal peptide occupies residues 1–15; it reads MKLLSLLMLAGIAQA. Residues N81, N111, N154, and N219 are each glycosylated (N-linked (GlcNAc...) asparagine). Active-site charge relay system residues include S613, D690, and H725.

The protein belongs to the peptidase S9B family.

It localises to the secreted. The enzyme catalyses Release of an N-terminal dipeptide, Xaa-Yaa-|-Zaa-, from a polypeptide, preferentially when Yaa is Pro, provided Zaa is neither Pro nor hydroxyproline.. Its function is as follows. Extracellular dipeptidyl-peptidase which removes N-terminal dipeptides sequentially from polypeptides having unsubstituted N-termini provided that the penultimate residue is proline. Contributes to pathogenicity. This is Dipeptidyl peptidase 4 (DPP4) from Trichophyton rubrum (Athlete's foot fungus).